The chain runs to 120 residues: C-C motif chemokine 2 (120 aa).

The signal sequence occupies residues 1 to 23 (MQRSSVLLCLLVIEATFCSLLMA). Pyrrolidone carboxylic acid is present on Gln24. 2 cysteine pairs are disulfide-bonded: Cys33-Cys57 and Cys34-Cys73. The interval 91-120 (RTQQKQNSTAPQTSKPLNIRFTTQDPKNRS) is disordered. A compositionally biased stretch (polar residues) spans 93 to 120 (QQKQNSTAPQTSKPLNIRFTTQDPKNRS). N-linked (GlcNAc...) asparagine glycosylation occurs at Asn97.

Belongs to the intercrine beta (chemokine CC) family. As to quaternary structure, monomer or homodimer; in equilibrium. Is tethered on endothelial cells by glycosaminoglycan (GAG) side chains of proteoglycans. Interacts with TNFAIP6 (via Link domain). In terms of processing, processing at the N-terminus can regulate receptor and target cell selectivity. Deletion of the N-terminal residue converts it from an activator of basophil to an eosinophil chemoattractant. Post-translationally, N-Glycosylated.

It localises to the secreted. Acts as a ligand for C-C chemokine receptor CCR2. Signals through binding and activation of CCR2 and induces a strong chemotactic response and mobilization of intracellular calcium ions. Exhibits a chemotactic activity for monocytes and basophils but not neutrophils or eosinophils. Plays an important role in mediating peripheral nerve injury-induced neuropathic pain. Increases NMDA-mediated synaptic transmission in both dopamine D1 and D2 receptor-containing neurons, which may be caused by MAPK/ERK-dependent phosphorylation of GRIN2B/NMDAR2B. The sequence is that of C-C motif chemokine 2 (CCL2) from Cavia porcellus (Guinea pig).